The sequence spans 264 residues: Glycosylphosphatidylinositol anchor biosynthesis protein 11 (264 aa).

The segment at 1–45 (MPLVDPVTMSTPSTPAKAMGKSLPNTVKDPSPPPKAGSHTRSPVE) is disordered. 6 helical membrane-spanning segments follow: residues 49–69 (NSYYIAASIPALQLQIFVLLW), 83–103 (LILPVMALIQVFYAVVLLPVA), 132–152 (LLSLLLTLIATPPIHALMVLF), 160–180 (APHTFLCALNLSLLTLFPLFY), 202–222 (SVGGLVGACFGAWLGAVPIPL), and 233–253 (VTVLTGIYVGYAIGSYGGRTL).

Belongs to the PIGF family.

The protein resides in the endoplasmic reticulum membrane. The protein operates within glycolipid biosynthesis; glycosylphosphatidylinositol-anchor biosynthesis. Its function is as follows. Acts in the GPI biosynthetic pathway between GlcNAc-PI synthesis and GPI transfer to protein. This Pyricularia oryzae (strain 70-15 / ATCC MYA-4617 / FGSC 8958) (Rice blast fungus) protein is Glycosylphosphatidylinositol anchor biosynthesis protein 11 (GPI11).